Consider the following 299-residue polypeptide: Protein LacX, chromosomal (299 aa).

This is Protein LacX, chromosomal (lacX) from Lactococcus lactis subsp. lactis (Streptococcus lactis).